The primary structure comprises 166 residues: MSWFTGASLAAGSLVDMAGTISSIVAQQRQIDLMAEANRIQADWVRRQEALQIRGQDISRDLAVNGTAQRVESLVNAGFTPVDARRLAGGTETVSYGLLDRPILQRGILSGITETRHLQAMQGALSAFKNGASYGAPPAPSGFVNPNYQPSPPRLKLGPRPPSTNV.

The tract at residues 138–166 (PAPSGFVNPNYQPSPPRLKLGPRPPSTNV) is disordered. The segment covering 149–166 (QPSPPRLKLGPRPPSTNV) has biased composition (pro residues).

The protein belongs to the vesivirus VP2 protein family. Homooligomer. The portal-like structure consists in 12 copies of VP2. Interacts with capsid protein VP1.

It is found in the virion. Its subcellular location is the host cytoplasm. In terms of biological role, minor structural protein that forms a portal-like structure at a unique three-fold axis of symmetry, following binding to the host receptor. The channel formed by VP2 may allow the delivery of the viral genome through the host endosomal membrane. In Homo sapiens (Human), this protein is Minor capsid protein VP2.